Here is a 124-residue protein sequence, read N- to C-terminus: Peptidyl-tRNA hydrolase (124 aa).

The protein belongs to the PTH2 family.

Its subcellular location is the cytoplasm. The enzyme catalyses an N-acyl-L-alpha-aminoacyl-tRNA + H2O = an N-acyl-L-amino acid + a tRNA + H(+). In terms of biological role, the natural substrate for this enzyme may be peptidyl-tRNAs which drop off the ribosome during protein synthesis. The sequence is that of Peptidyl-tRNA hydrolase from Aeropyrum pernix (strain ATCC 700893 / DSM 11879 / JCM 9820 / NBRC 100138 / K1).